Consider the following 506-residue polypeptide: NAD(P)H-quinone oxidoreductase subunit 2 (506 aa).

The next 14 helical transmembrane spans lie at alanine 14 to alanine 34, tryptophan 42 to tryptophan 62, leucine 79 to tryptophan 99, proline 108 to glycine 128, leucine 132 to tyrosine 152, leucine 167 to leucine 187, phenylalanine 206 to valine 226, proline 240 to isoleucine 260, leucine 276 to glutamine 296, methionine 302 to threonine 322, valine 330 to phenylalanine 350, leucine 374 to glycine 394, leucine 409 to isoleucine 429, and isoleucine 462 to phenylalanine 482.

This sequence belongs to the complex I subunit 2 family. As to quaternary structure, NDH-1 can be composed of about 15 different subunits; different subcomplexes with different compositions have been identified which probably have different functions.

The protein localises to the cellular thylakoid membrane. The catalysed reaction is a plastoquinone + NADH + (n+1) H(+)(in) = a plastoquinol + NAD(+) + n H(+)(out). The enzyme catalyses a plastoquinone + NADPH + (n+1) H(+)(in) = a plastoquinol + NADP(+) + n H(+)(out). Its function is as follows. NDH-1 shuttles electrons from an unknown electron donor, via FMN and iron-sulfur (Fe-S) centers, to quinones in the respiratory and/or the photosynthetic chain. The immediate electron acceptor for the enzyme in this species is believed to be plastoquinone. Couples the redox reaction to proton translocation, and thus conserves the redox energy in a proton gradient. Cyanobacterial NDH-1 also plays a role in inorganic carbon-concentration. This Prochlorococcus marinus subsp. pastoris (strain CCMP1986 / NIES-2087 / MED4) protein is NAD(P)H-quinone oxidoreductase subunit 2.